Reading from the N-terminus, the 274-residue chain is Large ribosomal subunit protein uL2 (274 aa).

The disordered stretch occupies residues 224-274 (VAMNPVDHPHGGGEGRTSGGRHPVTPWGIPTKGYKTRRNKRSNKLIVQKRK). The segment covering 257–274 (YKTRRNKRSNKLIVQKRK) has biased composition (basic residues).

Belongs to the universal ribosomal protein uL2 family. In terms of assembly, part of the 50S ribosomal subunit. Forms a bridge to the 30S subunit in the 70S ribosome.

Functionally, one of the primary rRNA binding proteins. Required for association of the 30S and 50S subunits to form the 70S ribosome, for tRNA binding and peptide bond formation. It has been suggested to have peptidyltransferase activity; this is somewhat controversial. Makes several contacts with the 16S rRNA in the 70S ribosome. The polypeptide is Large ribosomal subunit protein uL2 (Francisella tularensis subsp. mediasiatica (strain FSC147)).